A 218-amino-acid chain; its full sequence is Elongation factor Ts (218 aa).

The tract at residues 82–85 (TDFV) is involved in Mg(2+) ion dislocation from EF-Tu.

Belongs to the EF-Ts family.

It localises to the cytoplasm. Its function is as follows. Associates with the EF-Tu.GDP complex and induces the exchange of GDP to GTP. It remains bound to the aminoacyl-tRNA.EF-Tu.GTP complex up to the GTP hydrolysis stage on the ribosome. The sequence is that of Elongation factor Ts from Prochlorococcus marinus (strain NATL2A).